We begin with the raw amino-acid sequence, 270 residues long: 23S rRNA (adenosine(1067)-2'-O)-methyltransferase (270 aa).

Positions 135, 165, 218, 238, and 247 each coordinate S-adenosyl-L-methionine.

It belongs to the class IV-like SAM-binding methyltransferase superfamily. RNA methyltransferase TsnR/AvirB family.

It catalyses the reaction adenosine(1067) in 23S rRNA + S-adenosyl-L-methionine = 2'-O-methyladenosine(1067) in 23S rRNA + S-adenosyl-L-homocysteine + H(+). Functionally, specifically methylates the adenosine-1067 in 23S ribosomal RNA. Confers resistance to antibiotic thiostrepton. The polypeptide is 23S rRNA (adenosine(1067)-2'-O)-methyltransferase (Streptomyces laurentii).